A 264-amino-acid chain; its full sequence is Tryptophan synthase alpha chain (264 aa).

Catalysis depends on proton acceptor residues Glu-44 and Asp-55.

This sequence belongs to the TrpA family. As to quaternary structure, tetramer of two alpha and two beta chains.

It catalyses the reaction (1S,2R)-1-C-(indol-3-yl)glycerol 3-phosphate + L-serine = D-glyceraldehyde 3-phosphate + L-tryptophan + H2O. Its pathway is amino-acid biosynthesis; L-tryptophan biosynthesis; L-tryptophan from chorismate: step 5/5. Its function is as follows. The alpha subunit is responsible for the aldol cleavage of indoleglycerol phosphate to indole and glyceraldehyde 3-phosphate. The sequence is that of Tryptophan synthase alpha chain from Lactiplantibacillus plantarum (strain ATCC BAA-793 / NCIMB 8826 / WCFS1) (Lactobacillus plantarum).